We begin with the raw amino-acid sequence, 349 residues long: Isopentenyl-diphosphate delta-isomerase (349 aa).

6–7 (RK) contributes to the substrate binding site. Residues 62-64 (AMT), Ser93, and Asn122 contribute to the FMN site. Gln152 contacts substrate. Glu153 is a Mg(2+) binding site. FMN contacts are provided by residues Lys184, Thr214, 258–259 (GG), and 280–281 (AG).

It belongs to the IPP isomerase type 2 family. As to quaternary structure, homooctamer. Dimer of tetramers. The cofactor is FMN. NADPH is required as a cofactor. It depends on Mg(2+) as a cofactor.

It localises to the cytoplasm. The enzyme catalyses isopentenyl diphosphate = dimethylallyl diphosphate. Its function is as follows. Involved in the biosynthesis of isoprenoids. Catalyzes the 1,3-allylic rearrangement of the homoallylic substrate isopentenyl (IPP) to its allylic isomer, dimethylallyl diphosphate (DMAPP). This Bacillus cereus (strain AH187) protein is Isopentenyl-diphosphate delta-isomerase.